The sequence spans 590 residues: Guanylate-binding protein 5 (590 aa).

The segment at 1–306 (MAPEIHMPEP…LTYVDAINSG (306 aa)) is NLRP3-binding. Residues 1-310 (MAPEIHMPEP…DAINSGALPS (310 aa)) form a GTPase domain (Globular) region. The region spanning 35–277 (TQPVVVVAIV…FCSHIFTQSK (243 aa)) is the GB1/RHD3-type G domain. GTP contacts are provided by residues 45–52 (GLYRTGKS), 67–69 (VGS), 182–183 (RD), and L246. The segment at 529 to 590 (QIALEKARVA…RRHHHDCVIS (62 aa)) is required for tetramerization, but not for dimerization. C587 carries the cysteine methyl ester modification. C587 is lipidated: S-geranylgeranyl cysteine. Residues 588 to 590 (VIS) constitute a propeptide, removed in mature form.

The protein belongs to the TRAFAC class dynamin-like GTPase superfamily. GB1/RHD3 GTPase family. GB1 subfamily. In terms of assembly, homodimer; homodimerizes upon GTP-binding, forming a close face-to-face dimer. Heterodimer with other family members, including GBP1, GBP2, GBP3 and GBP4. May also form tetramers (dimer of dimers) in the presence of GTP. Interacts with NLRP3, possibly in its tetrameric form, and promotes PYCARD/ASC polymerization. Post-translationally, isoprenylation is required for proper subcellular location. As to expression, low expression, if any, in many tissues in the absence of stimulation.

The protein resides in the cytoplasmic vesicle membrane. It localises to the golgi apparatus membrane. Its subcellular location is the cytoplasm. It carries out the reaction GTP + H2O = GDP + phosphate + H(+). Interferon (IFN)-inducible GTPase that plays important roles in innate immunity against a diverse range of bacterial, viral and protozoan pathogens. Hydrolyzes GTP, but in contrast to other family members, does not produce GMP. Following infection, recruited to the pathogen-containing vacuoles or vacuole-escaped bacteria and acts as a positive regulator of inflammasome assembly by promoting the release of inflammasome ligands from bacteria. Acts by promoting lysis of pathogen-containing vacuoles, releasing pathogens into the cytosol. Following pathogen release in the cytosol, promotes recruitment of proteins that mediate bacterial cytolysis, such as Gm12250/Irgb10: this liberates ligands that are detected by inflammasomes, such as lipopolysaccharide (LPS) that activates the non-canonical CASP4/CASP11 inflammasome or double-stranded DNA (dsDNA) that activates the AIM2 inflammasome. As an activator of NLRP3 inflammasome assembly: promotes selective NLRP3 inflammasome assembly in response to microbial and soluble, but not crystalline, agents. Independently of its GTPase activity, acts as an inhibitor of various viruses infectivity by inhibiting FURIN-mediated maturation of viral envelope proteins. The protein is Guanylate-binding protein 5 of Mus musculus (Mouse).